A 445-amino-acid chain; its full sequence is GRAM domain-containing protein 2B (445 aa).

Position 1 is an N-acetylmethionine (Met-1). Positions 1-10 are enriched in polar residues; the sequence is MVKKPISSSD. The disordered stretch occupies residues 1–119; that stretch reads MVKKPISSSD…RKKSSSSSQY (119 aa). Residues 18 to 37 show a composition bias toward low complexity; that stretch reads PSSPKSSAGASHSSTDSPSS. Composition is skewed to polar residues over residues 56 to 68 and 82 to 93; these read KSPTAQSPTSSVE and SKSSFDGSNLLS. Over residues 94 to 112 the composition is skewed to basic and acidic residues; it reads DKNDCKTESKADSKTERKK. One can recognise a GRAM domain in the interval 123-190; the sequence is MHFHKLFLDV…FSVTLIKKTK (68 aa). Residues Ser-238, Ser-255, and Ser-265 each carry the phosphoserine modification. The segment at 277–331 is disordered; that stretch reads DLEGYSSSGSQTPESENSRDFHVTESQTVLNVTKGETKPPRTDAHGSRAPDGKAK. Residues 281–291 show a composition bias toward polar residues; that stretch reads YSSSGSQTPES. Over residues 311 to 330 the composition is skewed to basic and acidic residues; that stretch reads GETKPPRTDAHGSRAPDGKA.

In Rattus norvegicus (Rat), this protein is GRAM domain-containing protein 2B (Gramd2b).